Here is a 51-residue protein sequence, read N- to C-terminus: Sperm protamine P1 (51 aa).

A compositionally biased stretch (low complexity) spans 1-13 (MARYRCCRSQSRS). Residues 1 to 30 (MARYRCCRSQSRSRYYRQRQRSRRRRRRSC) form a disordered region. The segment covering 14-30 (RYYRQRQRSRRRRRRSC) has biased composition (basic residues). A disulfide bridge links C40 with C48.

This sequence belongs to the protamine P1 family. As to quaternary structure, cross-linked by interchain disulfide bonds around the DNA-helix. Post-translationally, phosphorylated by SRPK1. As to expression, testis.

The protein resides in the nucleus. It localises to the chromosome. Its function is as follows. Protamines substitute for histones in the chromatin of sperm during the haploid phase of spermatogenesis. They compact sperm DNA into a highly condensed, stable and inactive complex. The chain is Sperm protamine P1 (PRM1) from Homo sapiens (Human).